The chain runs to 137 residues: Large ribosomal subunit protein uL16 (137 aa).

Belongs to the universal ribosomal protein uL16 family. In terms of assembly, part of the 50S ribosomal subunit.

Its function is as follows. Binds 23S rRNA and is also seen to make contacts with the A and possibly P site tRNAs. The protein is Large ribosomal subunit protein uL16 of Methylorubrum extorquens (strain CM4 / NCIMB 13688) (Methylobacterium extorquens).